Here is a 596-residue protein sequence, read N- to C-terminus: Elongation factor 4 (596 aa).

One can recognise a tr-type G domain in the interval 2-184 (KHIRNFSIIA…TIVAQIPPPE (183 aa)). Residues 14 to 19 (DHGKST) and 131 to 134 (NKID) each bind GTP.

Belongs to the TRAFAC class translation factor GTPase superfamily. Classic translation factor GTPase family. LepA subfamily.

It is found in the cell inner membrane. The enzyme catalyses GTP + H2O = GDP + phosphate + H(+). Required for accurate and efficient protein synthesis under certain stress conditions. May act as a fidelity factor of the translation reaction, by catalyzing a one-codon backward translocation of tRNAs on improperly translocated ribosomes. Back-translocation proceeds from a post-translocation (POST) complex to a pre-translocation (PRE) complex, thus giving elongation factor G a second chance to translocate the tRNAs correctly. Binds to ribosomes in a GTP-dependent manner. The protein is Elongation factor 4 of Shewanella loihica (strain ATCC BAA-1088 / PV-4).